We begin with the raw amino-acid sequence, 249 residues long: Probable transcriptional regulatory protein LBL_2537 (249 aa).

This sequence belongs to the TACO1 family.

It localises to the cytoplasm. In Leptospira borgpetersenii serovar Hardjo-bovis (strain L550), this protein is Probable transcriptional regulatory protein LBL_2537.